The chain runs to 259 residues: MKHSKKLLLCISFLLITVFISGCGSMTKEDNKEEKIKKGFEKTLGMYPIKNLEDLYDKEGYRDEEFDEGDKGTWILYSEMVIQRKGDDLVTRGMILKVNRNTRTSKGNYIINKISTDSKGVSRNTQKKFPVKMENNKIIPIKKIEDSKIKREIDEFKFFAQYANFNSLKDYKNGDIATNPKVPSYSAEYDLENSDYNVKQLRKRYDIPTQQAPKLLLKGTGDLKGSSIGSKDIEFTFIEKPKKNIYFSDSLDYKPSEGH.

Positions 1–22 (MKHSKKLLLCISFLLITVFISG) are cleaved as a signal peptide. A lipid anchor (N-palmitoyl cysteine) is attached at Cys23. Residue Cys23 is the site of S-diacylglycerol cysteine attachment.

This sequence belongs to the staphylococcal tandem lipoprotein family.

Its subcellular location is the cell membrane. This is an uncharacterized protein from Staphylococcus epidermidis (strain ATCC 35984 / DSM 28319 / BCRC 17069 / CCUG 31568 / BM 3577 / RP62A).